A 334-amino-acid polypeptide reads, in one-letter code: Nucleoid-associated protein YPN_2714 (334 aa).

This sequence belongs to the YejK family.

It is found in the cytoplasm. It localises to the nucleoid. This is Nucleoid-associated protein YPN_2714 from Yersinia pestis bv. Antiqua (strain Nepal516).